Consider the following 516-residue polypeptide: UDP-N-acetylmuramyl-tripeptide synthetase (516 aa).

Residue Ser-38 participates in UDP-N-acetyl-alpha-D-muramoyl-L-alanyl-D-glutamate binding. 116 to 122 (GTKGKTT) contributes to the ATP binding site. Residues 162–163 (TT), Ser-189, and Arg-197 each bind UDP-N-acetyl-alpha-D-muramoyl-L-alanyl-D-glutamate. Position 231 is an N6-carboxylysine (Lys-231).

The protein belongs to the MurCDEF family. MurE subfamily. Carboxylation is probably crucial for Mg(2+) binding and, consequently, for the gamma-phosphate positioning of ATP.

Its subcellular location is the cytoplasm. Its pathway is cell wall biogenesis; peptidoglycan biosynthesis. Its function is as follows. Catalyzes the addition of an amino acid to the nucleotide precursor UDP-N-acetylmuramoyl-L-alanyl-D-glutamate (UMAG) in the biosynthesis of bacterial cell-wall peptidoglycan. The chain is UDP-N-acetylmuramyl-tripeptide synthetase from Lactobacillus delbrueckii subsp. bulgaricus (strain ATCC 11842 / DSM 20081 / BCRC 10696 / JCM 1002 / NBRC 13953 / NCIMB 11778 / NCTC 12712 / WDCM 00102 / Lb 14).